A 371-amino-acid polypeptide reads, in one-letter code: Putative glutamate--cysteine ligase 2 (371 aa).

Belongs to the glutamate--cysteine ligase type 2 family. YbdK subfamily.

It catalyses the reaction L-cysteine + L-glutamate + ATP = gamma-L-glutamyl-L-cysteine + ADP + phosphate + H(+). In terms of biological role, ATP-dependent carboxylate-amine ligase which exhibits weak glutamate--cysteine ligase activity. The sequence is that of Putative glutamate--cysteine ligase 2 from Paraburkholderia xenovorans (strain LB400).